Reading from the N-terminus, the 276-residue chain is Aquaporin-1 (276 aa).

Residues 1 to 10 lie on the Cytoplasmic side of the membrane; the sequence is MLDAEQKKNY. A helical transmembrane segment spans residues 11 to 31; the sequence is VAGAFGEFVGTAYFLFMGVGG. Residues 32–46 lie on the Extracellular side of the membrane; it reads AVNFLNNAAGSPLPG. Residues 47 to 67 traverse the membrane as a helical segment; sequence FAIPFCFGFSLFVNVFIWAPI. The Cytoplasmic segment spans residues 68–93; sequence SGGVFNPSITIALMATNPKDFPWYRG. Positions 73-75 match the NPA 1 motif; that stretch reads NPS. The chain crosses the membrane as a helical span at residues 94–114; the sequence is ILYIVSQFLGALFGSWLIDLI. Over 115 to 133 the chain is Extracellular; it reads QPEAPNAATLLADGVSVAQ. The chain crosses the membrane as a helical span at residues 134-154; sequence GLFMEMFATSVLTMAVLILAG. Residues 155 to 159 are Cytoplasmic-facing; sequence ERYGK. A helical membrane pass occupies residues 160–180; that stretch reads YLAPFGIGMSLFISALCAGPY. Residues 181–204 lie on the Extracellular side of the membrane; that stretch reads TGASLNPARTLGPAIVANQYGRAH. Positions 186–188 match the NPA 2 motif; the sequence is NPA. A helical transmembrane segment spans residues 205-225; it reads WIYYVGPTLGSLLAAGYWHIL. Residues 226–276 are Cytoplasmic-facing; it reads RILNIDVVDLKNVLNKCKKCGKEDPRISLKHCEECLKDDPKPEKYDIESQN.

Belongs to the MIP/aquaporin (TC 1.A.8) family.

The protein localises to the cell membrane. It carries out the reaction H2O(in) = H2O(out). Polyethylene glycol (PEG) stimulates whereas glycerol inhibits the aquaporin activity. Water channel required to facilitate the transport of water across membranes. Stimulates plant drought tolerance by facilitating the transport of water from the arbuscular mycorrhiza fungus to host plants. In Rhizophagus irregularis (Arbuscular mycorrhizal fungus), this protein is Aquaporin-1.